The chain runs to 926 residues: Serine/threonine-protein kinase SIK2 (926 aa).

The 252-residue stretch at 20 to 271 (YDIEGTLGKG…IAQIKEHKWM (252 aa)) folds into the Protein kinase domain. Thr-25 carries the post-translational modification Phosphothreonine. ATP is bound by residues 26–34 (LGKGNFAVV) and Lys-49. Lys-53 carries the N6-acetyllysine; by EP300 modification. Residue Asp-142 is the Proton acceptor of the active site. Thr-175 is modified (phosphothreonine; by LKB1). A UBA domain is found at 295–335 (EFNEQVLRLMHSLGIDQQKTIESLQNKSYNHFAAIYFLLVE). At Thr-484 the chain carries Phosphothreonine. Ser-534 and Ser-587 each carry phosphoserine. 2 stretches are compositionally biased toward low complexity: residues 644–659 (SSCP…ESVS) and 742–756 (SSYP…LPRQ). 3 disordered regions span residues 644 to 666 (SSCP…ASVH), 742 to 776 (SSYP…PLSP), and 801 to 896 (PLPS…SSYD). Positions 765-774 (APPFSLTQPL) are enriched in polar residues. The segment covering 822-834 (QPPPPPPPPPPRQ) has biased composition (pro residues).

Belongs to the protein kinase superfamily. CAMK Ser/Thr protein kinase family. SNF1 subfamily. Interacts with and phosphorylates TORC2/CRTC2. Mg(2+) serves as cofactor. Phosphorylated at Thr-175 by STK11/LKB1 in complex with STE20-related adapter-alpha (STRADA) pseudo kinase and CAB39. Phosphorylated at Thr-484 in response to insulin in adipocytes. Post-translationally, acetylation at Lys-53 inhibits kinase activity. Deacetylated by HDAC6.

The protein localises to the cytoplasm. It localises to the endoplasmic reticulum membrane. It catalyses the reaction L-seryl-[protein] + ATP = O-phospho-L-seryl-[protein] + ADP + H(+). It carries out the reaction L-threonyl-[protein] + ATP = O-phospho-L-threonyl-[protein] + ADP + H(+). Its activity is regulated as follows. Activated by phosphorylation on Thr-175. In terms of biological role, serine/threonine-protein kinase that plays a role in many biological processes such as fatty acid oxidation, autophagy, immune response or glucose metabolism. Phosphorylates 'Ser-794' of IRS1 in insulin-stimulated adipocytes, potentially modulating the efficiency of insulin signal transduction. Inhibits CREB activity by phosphorylating and repressing TORCs, the CREB-specific coactivators. Phosphorylates EP300 and thus inhibits its histone acetyltransferase activity. In turn, regulates the DNA-binding ability of several transcription factors such as PPARA or MLXIPL. Also plays a role in thymic T-cell development. In Homo sapiens (Human), this protein is Serine/threonine-protein kinase SIK2 (SIK2).